A 247-amino-acid polypeptide reads, in one-letter code: RNA-free ribonuclease P (247 aa).

The interval 223-247 (SPEGEKEKGEADKKKKSHSEEAEFI) is disordered.

It belongs to the HARP family.

It catalyses the reaction Endonucleolytic cleavage of RNA, removing 5'-extranucleotides from tRNA precursor.. In terms of biological role, RNA-free RNase P that catalyzes the removal of the 5'-leader sequence from pre-tRNA to produce the mature 5'-terminus. The protein is RNA-free ribonuclease P of Methanosarcina acetivorans (strain ATCC 35395 / DSM 2834 / JCM 12185 / C2A).